A 289-amino-acid polypeptide reads, in one-letter code: Splicing factor C9orf78 (289 aa).

The span at 1–12 (MPVVRKIFRRRR) shows a compositional bias: basic residues. The disordered stretch occupies residues 1–27 (MPVVRKIFRRRRGDSESEEDEQDSEEV). Residues 5-58 (RKIFRRRRGDSESEEDEQDSEEVRLKLEETREVQNLRKRPNGVSAVALLVGEKV) are interaction with SNRNP200. 2 positions are modified to phosphoserine: Ser-15 and Ser-17. Position 147 is a phosphotyrosine (Tyr-147). Residues 232-283 (LNAPIRRNKEEPKARPLRVGDTEKPEPERSPPNRKRPANEKATDDYHYEKFK) are compositionally biased toward basic and acidic residues. The interval 232–289 (LNAPIRRNKEEPKARPLRVGDTEKPEPERSPPNRKRPANEKATDDYHYEKFKKMNRRY) is disordered. Phosphothreonine is present on Thr-253. Ser-261 is subject to Phosphoserine.

It belongs to the TLS1 family. In terms of assembly, component of the spliceosome. Interacts with SNRNP200; the interaction is direct. Interacts with PRPF8.

It localises to the nucleus. It is found in the chromosome. The protein resides in the centromere. Plays a role in pre-mRNA splicing by promoting usage of the upstream 3'-splice site at alternative NAGNAG splice sites; these are sites featuring alternative acceptor motifs separated by only a few nucleotides. May also modulate exon inclusion events. Plays a role in spliceosomal remodeling by displacing WBP4 from SNRNP200 and may act to inhibit SNRNP200 helicase activity. Binds U5 snRNA. Required for proper chromosome segregation. Not required for splicing of shelterin components. The chain is Splicing factor C9orf78 (C9orf78) from Homo sapiens (Human).